Reading from the N-terminus, the 375-residue chain is MAKASVVVPEQVGAAAAAQVGCPCPGTTLFPYPPPRAGIAVRRKCLQAAQQLELGAGLRGGWVESMRASSPTHAKAAAALAAGVDEEHAAWMARHPSALGEFEKVVAASKGKQIVMFLDYDGTLSPIVDDPDAAFMSETMRMAVRSVAKHFPTAIVSGRCRDKVFEFVKLAELYYAGSHGMDIKGPASRHAAAKSPPHNKGVLFQPASEFLPMIEQVHQRLEQATSSIPGAKVENNKFCVSVHFRCVDEKSWGALAETVRRVVREFPRLRLSQGRMVFEVRPTIKWDKGKALEFLLDSLGFADCSDVLPVYIGDDRTDEDAFKVLRRRGQGVGILVSKHPKETSASFSLQEPAEVMEFLLRLVEWNRLSRTRLRL.

The protein belongs to the trehalose phosphatase family. A divalent metal cation serves as cofactor.

It carries out the reaction alpha,alpha-trehalose 6-phosphate + H2O = alpha,alpha-trehalose + phosphate. Its pathway is glycan biosynthesis; trehalose biosynthesis. Removes the phosphate from trehalose 6-phosphate to produce free trehalose. Trehalose accumulation in plant may improve abiotic stress tolerance. This chain is Probable trehalose-phosphate phosphatase 7 (TPP7), found in Oryza sativa subsp. japonica (Rice).